Consider the following 349-residue polypeptide: Dihydroorotase (349 aa).

Residues histidine 17 and histidine 19 each coordinate Zn(2+). Substrate-binding positions include 19-21 (HLR) and asparagine 45. Zn(2+) is bound by residues lysine 103, histidine 140, and histidine 178. The residue at position 103 (lysine 103) is an N6-carboxylysine. A substrate-binding site is contributed by histidine 140. A substrate-binding site is contributed by leucine 224. Aspartate 252 contributes to the Zn(2+) binding site. Aspartate 252 is a catalytic residue. Substrate contacts are provided by histidine 256 and alanine 268.

Belongs to the metallo-dependent hydrolases superfamily. DHOase family. Class II DHOase subfamily. In terms of assembly, homodimer. It depends on Zn(2+) as a cofactor.

The catalysed reaction is (S)-dihydroorotate + H2O = N-carbamoyl-L-aspartate + H(+). It functions in the pathway pyrimidine metabolism; UMP biosynthesis via de novo pathway; (S)-dihydroorotate from bicarbonate: step 3/3. Its function is as follows. Catalyzes the reversible cyclization of carbamoyl aspartate to dihydroorotate. The protein is Dihydroorotase of Buchnera aphidicola subsp. Schizaphis graminum (strain Sg).